A 239-amino-acid polypeptide reads, in one-letter code: Probable transcriptional regulatory protein Tcr_1104 (239 aa).

It belongs to the TACO1 family.

It localises to the cytoplasm. The polypeptide is Probable transcriptional regulatory protein Tcr_1104 (Hydrogenovibrio crunogenus (strain DSM 25203 / XCL-2) (Thiomicrospira crunogena)).